Consider the following 694-residue polypeptide: DNA-directed RNA polymerase subunit beta' (694 aa).

Zn(2+) contacts are provided by Cys69, Cys71, Cys87, and Cys90. The Mg(2+) site is built by Asp489, Asp491, and Asp493.

The protein belongs to the RNA polymerase beta' chain family. RpoC1 subfamily. As to quaternary structure, in plastids the minimal PEP RNA polymerase catalytic core is composed of four subunits: alpha, beta, beta', and beta''. When a (nuclear-encoded) sigma factor is associated with the core the holoenzyme is formed, which can initiate transcription. The cofactor is Mg(2+). Zn(2+) serves as cofactor.

It localises to the plastid. Its subcellular location is the chloroplast. The catalysed reaction is RNA(n) + a ribonucleoside 5'-triphosphate = RNA(n+1) + diphosphate. Functionally, DNA-dependent RNA polymerase catalyzes the transcription of DNA into RNA using the four ribonucleoside triphosphates as substrates. This Gossypium barbadense (Sea Island cotton) protein is DNA-directed RNA polymerase subunit beta'.